The primary structure comprises 357 residues: Cinnamyl alcohol dehydrogenase 5 (357 aa).

Cys-47 contacts Zn(2+). Thr-49 provides a ligand contact to NADP(+). Zn(2+) is bound by residues His-69, Glu-70, Cys-100, Cys-103, Cys-106, Cys-114, and Cys-163. NADP(+) is bound by residues Thr-167, 188 to 193 (GLGGVG), 211 to 216 (SSSNKK), Thr-251, Gly-275, and 298 to 300 (SFI).

Belongs to the zinc-containing alcohol dehydrogenase family. In terms of assembly, homodimer. Requires Zn(2+) as cofactor. Expressed at the lateral root initiation sites, in the vascular tissues of the primary lateral root and the root caps. Expressed in the hypocotyl, cotyledon and leaf veins, apical meristem region, at the base of the trichomes, hydathodes and cauline leaves. In stems, expressed in the cells associated with the vascular cambium, interfascicular cambium and the developing xylem. Expressed in the vascular strand of petals and sepals, anthers, stamen filaments, stigma in flowers, and abscission, style and stigmatic regions of siliques.

It carries out the reaction (E)-cinnamyl alcohol + NADP(+) = (E)-cinnamaldehyde + NADPH + H(+). The enzyme catalyses (E)-coniferol + NADP(+) = (E)-coniferaldehyde + NADPH + H(+). It catalyses the reaction (E)-sinapyl alcohol + NADP(+) = (E)-sinapaldehyde + NADPH + H(+). The catalysed reaction is (E)-4-coumaroyl alcohol + NADP(+) = (E)-4-coumaraldehyde + NADPH + H(+). It carries out the reaction (E)-caffeyl alcohol + NADP(+) = (E)-caffeyl aldehyde + NADPH + H(+). The protein operates within aromatic compound metabolism; phenylpropanoid biosynthesis. Functionally, involved in lignin biosynthesis in the floral stem. Catalyzes the final step specific for the production of lignin monomers. Catalyzes the NADPH-dependent reduction of coniferaldehyde, 5-hydroxyconiferaldehyde, sinapaldehyde, 4-coumaraldehyde and caffeyl aldehyde to their respective alcohols. The chain is Cinnamyl alcohol dehydrogenase 5 from Arabidopsis thaliana (Mouse-ear cress).